A 180-amino-acid chain; its full sequence is Large ribosomal subunit protein uL5 (180 aa).

The protein belongs to the universal ribosomal protein uL5 family. Part of the 50S ribosomal subunit; part of the 5S rRNA/L5/L18/L25 subcomplex. Contacts the 5S rRNA and the P site tRNA. Forms a bridge to the 30S subunit in the 70S ribosome.

Functionally, this is one of the proteins that bind and probably mediate the attachment of the 5S RNA into the large ribosomal subunit, where it forms part of the central protuberance. In the 70S ribosome it contacts protein S13 of the 30S subunit (bridge B1b), connecting the 2 subunits; this bridge is implicated in subunit movement. Contacts the P site tRNA; the 5S rRNA and some of its associated proteins might help stabilize positioning of ribosome-bound tRNAs. In Synechococcus sp. (strain JA-2-3B'a(2-13)) (Cyanobacteria bacterium Yellowstone B-Prime), this protein is Large ribosomal subunit protein uL5.